The primary structure comprises 139 residues: Ribosome-binding factor A (139 aa).

Residues 120-139 (PENLLAVEDNTDEDDESFSE) form a disordered region. The segment covering 128–139 (DNTDEDDESFSE) has biased composition (acidic residues).

It belongs to the RbfA family. As to quaternary structure, monomer. Binds 30S ribosomal subunits, but not 50S ribosomal subunits or 70S ribosomes.

Its subcellular location is the cytoplasm. In terms of biological role, one of several proteins that assist in the late maturation steps of the functional core of the 30S ribosomal subunit. Associates with free 30S ribosomal subunits (but not with 30S subunits that are part of 70S ribosomes or polysomes). Required for efficient processing of 16S rRNA. May interact with the 5'-terminal helix region of 16S rRNA. The sequence is that of Ribosome-binding factor A from Nostoc punctiforme (strain ATCC 29133 / PCC 73102).